We begin with the raw amino-acid sequence, 205 residues long: MHRLALVVATVAYLCAGHAPLQHITGTQRLVQVLIHNRYLAVRSDGTVGGTTYASSLDTVLQRIAIAHGRILLRNAVSCMYVCLDRCGAMYASAALSSDCILNEVMLENNYDVMFKIYNGKKTYVALDNTGNPRRVQLPRQRPLRMMNVYTFIMRIPLNYISVSQCAKPNKVIRHRKLPLVVQTTLNTISIYIITHVTMLFDHVD.

An N-terminal signal peptide occupies residues 1–17; it reads MHRLALVVATVAYLCAG.

The protein belongs to the heparin-binding growth factors family.

In Orgyia pseudotsugata multicapsid polyhedrosis virus (OpMNPV), this protein is Fibroblast growth factor homolog (FGF).